Consider the following 469-residue polypeptide: Ribosomal protein uS12 methylthiotransferase RimO (469 aa).

Residues 17 to 132 (PRVGFVSLGC…VMDAVHLNLP (116 aa)) enclose the MTTase N-terminal domain. Positions 26, 62, 91, 167, 171, and 174 each coordinate [4Fe-4S] cluster. The Radical SAM core domain maps to 153 to 395 (LTPKHYAYLK…AVAEEVSSLK (243 aa)). In terms of domain architecture, TRAM spans 397-469 (QQRVGATMQV…QGHDLVAIPV (73 aa)).

It belongs to the methylthiotransferase family. RimO subfamily. Requires [4Fe-4S] cluster as cofactor.

It is found in the cytoplasm. The catalysed reaction is L-aspartate(89)-[ribosomal protein uS12]-hydrogen + (sulfur carrier)-SH + AH2 + 2 S-adenosyl-L-methionine = 3-methylsulfanyl-L-aspartate(89)-[ribosomal protein uS12]-hydrogen + (sulfur carrier)-H + 5'-deoxyadenosine + L-methionine + A + S-adenosyl-L-homocysteine + 2 H(+). In terms of biological role, catalyzes the methylthiolation of an aspartic acid residue of ribosomal protein uS12. The sequence is that of Ribosomal protein uS12 methylthiotransferase RimO from Polaromonas sp. (strain JS666 / ATCC BAA-500).